The chain runs to 104 residues: UPF0145 protein GTNG_1265 (104 aa).

It belongs to the UPF0145 family.

In Geobacillus thermodenitrificans (strain NG80-2), this protein is UPF0145 protein GTNG_1265.